The chain runs to 209 residues: Uridine kinase (209 aa).

An ATP-binding site is contributed by 12–19 (GGSGGGKT).

Belongs to the uridine kinase family.

The protein localises to the cytoplasm. It catalyses the reaction uridine + ATP = UMP + ADP + H(+). The enzyme catalyses cytidine + ATP = CMP + ADP + H(+). Its pathway is pyrimidine metabolism; CTP biosynthesis via salvage pathway; CTP from cytidine: step 1/3. The protein operates within pyrimidine metabolism; UMP biosynthesis via salvage pathway; UMP from uridine: step 1/1. The chain is Uridine kinase from Streptococcus agalactiae serotype V (strain ATCC BAA-611 / 2603 V/R).